Reading from the N-terminus, the 214-residue chain is MAAEVPTFKLVLVGDGGTGKTTFVKRHLTGEFEKKYIATIGVEVHPLAFYTNFGEIKFDVWDTAGQEKFGGLRDGYYINAQCGIIMFDVTSRITYKNVPNWHRDLVRVCENIPIVLCGNKVDVKERKVKAKTITFHRKKNLQYYDISAKSNYNFEKPFLWLARKLAGNPQLDFVASPALAPPEVQVDEQLMQQYQQEMERATALPLPDEDDADL.

One can recognise a Small GTPase Ran-type domain in the interval E4–N168. D15–T22 is a GTP binding site. The segment at K34–V42 is switch-I. GTP-binding positions include G65, N119–D122, and S147–K149. Residues G65–Q81 are switch-II.

Belongs to the small GTPase superfamily. Ran family. In terms of assembly, found in a nuclear export complex with RanGTP, exportin and pre-miRNA.

It is found in the nucleus. In terms of biological role, GTP-binding protein involved in nucleocytoplasmic transport. Required for the import of protein into the nucleus and also for RNA export. Involved in chromatin condensation and control of cell cycle. This is GTP-binding nuclear protein GSP1/Ran (GSP1) from Eremothecium gossypii (strain ATCC 10895 / CBS 109.51 / FGSC 9923 / NRRL Y-1056) (Yeast).